Here is a 231-residue protein sequence, read N- to C-terminus: UMP-CMP kinase (231 aa).

57–62 (GSGKGT) contributes to the ATP binding site. Residues 77 to 106 (SAGDLLRREIASGSAYGSVILSTIREGKIV) are NMP. A ribonucleoside 5'-phosphate contacts are provided by residues R83, 104 to 106 (KIV), and 131 to 134 (GFPR). Position 138 (N138) interacts with CMP. The tract at residues 169–177 (NRNQGRVDD) is LID. An ATP-binding site is contributed by R170. Residues R174 and R185 each contribute to the a ribonucleoside 5'-phosphate site. G213 lines the ATP pocket.

This sequence belongs to the adenylate kinase family. UMP-CMP kinase subfamily. Monomer. It depends on Mg(2+) as a cofactor.

The protein localises to the cytoplasm. It is found in the nucleus. The enzyme catalyses CMP + ATP = CDP + ADP. It carries out the reaction dCMP + ATP = dCDP + ADP. It catalyses the reaction UMP + ATP = UDP + ADP. Its function is as follows. Catalyzes the phosphorylation of pyrimidine nucleoside monophosphates at the expense of ATP. Plays an important role in de novo pyrimidine nucleotide biosynthesis. Has preference for UMP and CMP as phosphate acceptors. The polypeptide is UMP-CMP kinase (Prunus armeniaca (Apricot)).